The following is a 1383-amino-acid chain: DNA-directed RNA polymerase subunit beta (1383 aa).

This sequence belongs to the RNA polymerase beta chain family. In terms of assembly, the RNAP catalytic core consists of 2 alpha, 1 beta, 1 beta' and 1 omega subunit. When a sigma factor is associated with the core the holoenzyme is formed, which can initiate transcription.

It carries out the reaction RNA(n) + a ribonucleoside 5'-triphosphate = RNA(n+1) + diphosphate. Functionally, DNA-dependent RNA polymerase catalyzes the transcription of DNA into RNA using the four ribonucleoside triphosphates as substrates. In Anaplasma phagocytophilum (strain HZ), this protein is DNA-directed RNA polymerase subunit beta.